Here is a 524-residue protein sequence, read N- to C-terminus: Sterol O-acyltransferase 2 (524 aa).

A disordered region spans residues 1 to 31 (MEPKAPQLRRRERQGEEQENGACGEGNTRTH). Topologically, residues 1-118 (MEPKAPQLRR…LDELMGVQHF (118 aa)) are cytoplasmic. H117 contacts cholesterol. The chain crosses the membrane as a helical span at residues 119–140 (RTIYHMFIAGLCVLIISTLAID). At 141-160 (FIDEGRLMLEFDLLLFSFGQ) the chain is on the lumenal side. A helical membrane pass occupies residues 161 to 186 (LPLALMMWVPMFLSTLLLPYQTLRLW). Topologically, residues 187–198 (ARPRSGGAWTLG) are cytoplasmic. A helical membrane pass occupies residues 199-222 (ASLGCVLLAAHAAVLCVLPVHVSV). Residues 223-230 (KHELPPAS) are Lumenal-facing. The chain crosses the membrane as a helical span at residues 231–254 (RCVLVFEQVRFLMKSYSFLRETVP). Residues 255 to 295 (GIFCVRGGKGICTPSFSSYLYFLFCPTLIYRETYPRTPSIR) lie on the Cytoplasmic side of the membrane. Cysteine sulfenic acid (-SOH); alternate is present on C279. Residue C279 forms a Glycyl cysteine thioester (Cys-Gly) (interchain with G-Cter in ubiquitin); alternate linkage. The helical transmembrane segment at 296 to 328 (WNYVAKNFAQALGCLLYACFILGRLCVPVFANM) threads the bilayer. Residues 329 to 345 (SREPFSTRALLLSILHA) are Lumenal-facing. Residues 346–371 (TGPGIFMLLLIFFAFLHCWLNAFAEM) form a helical membrane-spanning segment. Over 372–419 (LRFGDRMFYRDWWNSTSFSNYYRTWNVVVHDWLYSYVYQDGLWLLGRQ) the chain is Cytoplasmic. Residues 379-385 (FYRDWWN) carry the FYXDWWN motif motif. An acyl-CoA-binding residues include N391, R394, N397, H401, Y409, and S432. The chain crosses the membrane as a helical span at residues 420–444 (GRGAAMLGVFLVSALVHEYIFCFVL). The active site involves H436. Topologically, residues 445-450 (GFFYPV) are lumenal. A helical transmembrane segment spans residues 451-466 (MLILFLVVGGLLNFTM). The Cytoplasmic segment spans residues 467–472 (NDRHTG). A helical membrane pass occupies residues 473 to 504 (PAWNILMWTFLFLGQGIQVSLYCQEWYARRHC). The Lumenal portion of the chain corresponds to 505-524 (PLPQPTFWELVTPRSWSCHP).

This sequence belongs to the membrane-bound acyltransferase family. Sterol o-acyltransferase subfamily. As to quaternary structure, may form homo- or heterodimers. Interacts with INSIG1; the interaction is direct and promotes association with AMFR/gp78. In terms of processing, polyubiquitinated by AMFR/gp78 at Cys-279, leading to its degradation when the lipid levels are low. Association with AMFR/gp78 is mediated via interaction with INSIG1. High concentration of cholesterol and fatty acid results in Cys-279 oxidation, preventing ubiquitination at the same site, resulting in protein stabilization. Oxidized at Cys-279: high concentration of cholesterol and fatty acid induce reactive oxygen species, which oxidizes Cys-279, preventing ubiquitination at the same site, and resulting in protein stabilization.

The protein resides in the endoplasmic reticulum membrane. The enzyme catalyses a sterol + a long-chain fatty acyl-CoA = a long-chain 3-hydroxysterol ester + CoA. It carries out the reaction cholesterol + an acyl-CoA = a cholesterol ester + CoA. The catalysed reaction is cholesterol + (9Z)-octadecenoyl-CoA = cholesteryl (9Z-octadecenoate) + CoA. It catalyses the reaction (5Z,8Z,11Z,14Z,17Z)-eicosapentaenoyl-CoA + cholesterol = (5Z,8Z,11Z,14Z,17Z-eicosapentaenoyl)-cholesterol + CoA. The enzyme catalyses (9Z,12Z,15Z)-octadecatrienoyl-CoA + cholesterol = (9Z,12Z,15Z-octadecatrienoyl)-cholesterol + CoA. It carries out the reaction (5Z,8Z,11Z,14Z)-eicosatetraenoyl-CoA + cholesterol = cholesteryl (5Z,8Z,11Z,14Z)-eicosatetraenoate + CoA. Catalyzes the formation of fatty acid-cholesterol esters, which are less soluble in membranes than cholesterol. Plays a role in lipoprotein assembly and dietary cholesterol absorption. Utilizes oleoyl-CoA ((9Z)-octadecenoyl-CoA) and linolenoyl-CoA ((9Z,12Z,15Z)-octadecatrienoyl-CoA) as substrates. May provide cholesteryl esters for lipoprotein secretion from hepatocytes and intestinal mucosa. In Rattus norvegicus (Rat), this protein is Sterol O-acyltransferase 2.